The sequence spans 209 residues: Guanylyl cyclase-activating protein 3 (209 aa).

Gly-2 carries N-myristoyl glycine lipidation. Asn-3 carries the deamidated asparagine modification. EF-hand domains follow at residues 15–50, 52–87, 88–123, and 130–165; these read PTQE…QGLN, KANK…IMQE, KMEQ…VQAL, and SPEE…DQDL. Ca(2+) is bound by residues Asp-65, Asn-67, Asp-69, Glu-76, Asp-101, Asp-103, Asn-105, Ser-107, Glu-112, Asp-143, Asn-145, Asp-147, Glu-149, and Glu-154. Residues 187–209 are disordered; sequence QPDMETDSSKSPDKAGLGKVKMK.

In terms of tissue distribution, retina.

In terms of biological role, stimulates guanylyl cyclase 1 (GC1) and GC2 when free calcium ions concentration is low and inhibits guanylyl cyclases when free calcium ions concentration is elevated. This Ca(2+)-sensitive regulation of guanylyl cyclase (GC) is a key event in recovery of the dark state of rod photoreceptors following light exposure. This Homo sapiens (Human) protein is Guanylyl cyclase-activating protein 3 (GUCA1C).